We begin with the raw amino-acid sequence, 676 residues long: Electrogenic aspartate/glutamate antiporter SLC25A13, mitochondrial (676 aa).

Alanine 2 bears the N-acetylalanine mark. The tract at residues 2–295 (AAAKVALTKR…TLADIERIAP (294 aa)) is regulatory N-terminal domain. The Mitochondrial intermembrane portion of the chain corresponds to 2-332 (AAAKVALTKR…LLQLAESAYR (331 aa)). Lysine 18 is modified (N6-acetyllysine). EF-hand domains lie at 51–86 (SQPN…SVLC), 87–122 (APDA…TTIH), 123–157 (QHIP…FLLE), and 158–193 (IQLE…IRPH). Aspartate 66, threonine 68, aspartate 70, leucine 72, and glutamate 77 together coordinate Ca(2+). A linker loop domain region spans residues 296 to 311 (LEEGMLPFNLAEAQRQ). Positions 322–613 (FLLQLAESAY…LQRWFYVDFG (292 aa)) are carrier domain. 3 Solcar repeats span residues 327 to 419 (AESA…VRDK), 427 to 511 (VPLL…VKAS), and 519 to 607 (VSPG…LQRW). A helical membrane pass occupies residues 333–350 (FGLGSIAGAVGATAVYPI). Residues 351-393 (DLVKTRMQNQRSTGSFVGELMYKNSFDCFKKVLRYEGFFGLYR) are Mitochondrial matrix-facing. N6-acetyllysine occurs at positions 354 and 373. The helical transmembrane segment at 394–413 (GLLPQLLGVAPEKAIKLTVN) threads the bilayer. The Mitochondrial intermembrane segment spans residues 414-436 (DFVRDKFMHKDGSVPLLAEIFAG). Residues 437-450 (GCAGGSQVIFTNPL) traverse the membrane as a helical segment. The Mitochondrial matrix segment spans residues 451–485 (EIVKIRLQVAGEITTGPRVSALSVVRDLGFFGIYK). Lysine 454 carries the N6-methyllysine modification. Lysine 485 is modified (N6-acetyllysine; alternate). An N6-succinyllysine; alternate modification is found at lysine 485. The helical transmembrane segment at 486 to 505 (GAKACFLRDIPFSAIYFPCY) threads the bilayer. Over 506 to 524 (AHVKASFANEDGQVSPGSL) the chain is Mitochondrial intermembrane. Residues 525-542 (LLAGAIAGMPAASLVTPA) traverse the membrane as a helical segment. At 543 to 581 (DVIKTRLQVAARAGQTTYNGVTDCFRKILREEGPKALWK) the chain is on the mitochondrial matrix side. Position 581 is an N6-succinyllysine (lysine 581). The helical transmembrane segment at 582-601 (GVAARVFRSSPQFGVTLLTY) threads the bilayer. At 602–676 (ELLQRWFYVD…STSKVTAGDS (75 aa)) the chain is on the mitochondrial intermembrane side. The C-terminal domain stretch occupies residues 614–676 (GVKPVGSEPV…STSKVTAGDS (63 aa)). The residue at position 663 (lysine 663) is an N6-acetyllysine. Serine 667 bears the Phosphoserine mark.

The protein belongs to the mitochondrial carrier (TC 2.A.29) family. Homodimer (via N-terminus). In terms of tissue distribution, at 10.5 dpc, expressed in branchial arches, a well as in the limb and tail buds. At 13.5 dpc expression is predominant in epithelial structures and the forebrain, kidney and liver. Expression in liver is maintained into adulthood.

It localises to the mitochondrion inner membrane. The enzyme catalyses L-aspartate(in) + L-glutamate(out) + H(+)(out) = L-aspartate(out) + L-glutamate(in) + H(+)(in). It catalyses the reaction 3-sulfino-L-alanine(out) + L-glutamate(in) + H(+)(in) = 3-sulfino-L-alanine(in) + L-glutamate(out) + H(+)(out). The catalysed reaction is 3-sulfino-L-alanine(out) + L-aspartate(in) = 3-sulfino-L-alanine(in) + L-aspartate(out). Mitochondrial electrogenic aspartate/glutamate antiporter that favors efflux of aspartate and entry of glutamate and proton within the mitochondria as part of the malate-aspartate shuttle. Also mediates the uptake of L-cysteinesulfinate (3-sulfino-L-alanine) by mitochondria in exchange of L-glutamate and proton. Can also exchange L-cysteinesulfinate with aspartate in their anionic form without any proton translocation. Lacks transport activity towards gamma-aminobutyric acid (GABA). The sequence is that of Electrogenic aspartate/glutamate antiporter SLC25A13, mitochondrial from Mus musculus (Mouse).